The sequence spans 531 residues: Putative F-box protein At2g02890 (531 aa).

Positions 141–188 constitute an F-box domain; it reads RHSSSLTNDLIEEILSRLHSKSVARFRCVSKQCASMFASPYFKKLFQT.

The chain is Putative F-box protein At2g02890 from Arabidopsis thaliana (Mouse-ear cress).